The chain runs to 429 residues: Enolase (429 aa).

Position 168 (Gln-168) interacts with (2R)-2-phosphoglycerate. The Proton donor role is filled by Glu-210. The Mg(2+) site is built by Asp-247, Glu-288, and Asp-315. (2R)-2-phosphoglycerate-binding residues include Lys-340, Arg-369, Ser-370, and Lys-391. Catalysis depends on Lys-340, which acts as the Proton acceptor.

It belongs to the enolase family. Requires Mg(2+) as cofactor.

The protein localises to the cytoplasm. The protein resides in the secreted. Its subcellular location is the cell surface. The catalysed reaction is (2R)-2-phosphoglycerate = phosphoenolpyruvate + H2O. Its pathway is carbohydrate degradation; glycolysis; pyruvate from D-glyceraldehyde 3-phosphate: step 4/5. In terms of biological role, catalyzes the reversible conversion of 2-phosphoglycerate (2-PG) into phosphoenolpyruvate (PEP). It is essential for the degradation of carbohydrates via glycolysis. The protein is Enolase of Trichormus variabilis (strain ATCC 29413 / PCC 7937) (Anabaena variabilis).